The primary structure comprises 553 residues: uncharacterized protein (553 aa).

The next 5 helical transmembrane spans lie at 13 to 30 (ALQA…GLGL), 37 to 59 (GISL…GLSI), 69 to 91 (SFGL…FSSF), 98 to 120 (LNML…SYTT), and 157 to 179 (TPAL…AVLL). RCK C-terminal domains are found at residues 190–273 (LEVQ…LFGE) and 281–365 (KEDI…VLGN). Transmembrane regions (helical) follow at residues 375–397 (LVAV…SIPG), 402–424 (VRLG…GPRL), 436–458 (LMLR…GAHF), 468–490 (LLWI…FFAF), 497–514 (FGSV…PMAL), and 529–551 (AYAT…LLMF).

The protein belongs to the AAE transporter (TC 2.A.81) family.

It is found in the cell membrane. This is an uncharacterized protein from Bacteroides fragilis (strain YCH46).